The chain runs to 439 residues: Protein ABHD8 (439 aa).

Disordered regions lie at residues 49 to 70 (AGPA…AAQG) and 124 to 156 (PAGS…RPKR). The span at 136–145 (AGSGSGSGSG) shows a compositional bias: gly residues. Over residues 146 to 156 (GRRRRARRPKR) the composition is skewed to basic residues. The 103-residue stretch at 177–279 (VLFFIHGVGG…HKVIMINGGG (103 aa)) folds into the AB hydrolase-1 domain. Catalysis depends on charge relay system residues serine 252, aspartate 370, and histidine 398.

Belongs to the AB hydrolase superfamily. As to quaternary structure, interacts with NLRP3 (via NACHT and LLR domains); this interaction is enhanced in the presence of NLRP3 inflammasome inducers, such as ATP, nigericin, silica, or alum. Interacts with ZDHHC12. (Microbial infection) Interacts with SARS-CoV-2 nucleoprotein N; this interaction disrupts the NLRP3-ABHD8 association, enhancing NLRP3 stability, ultimately leading to increased inflammasome activation.

Its subcellular location is the cytoplasm. Functionally, negatively regulates NLRP3-driven inflammation. Promotes NLRP3 degradation through the chaperone-mediated autophagy (CMA) pathway, hence attenuating inflammasome activation and IL1B secretion. Acts by recruiting palmitoyltransferase ZDHHC12 to NLRP3, facilitating NLRP3 palmitoylation and subsequent degradation. The chain is Protein ABHD8 from Homo sapiens (Human).